A 401-amino-acid polypeptide reads, in one-letter code: Glyceraldehyde-3-phosphate dehydrogenase A, chloroplastic (401 aa).

The N-terminal 65 residues, 1-65 (MASNMLSIAN…RSSQNGVVEA (65 aa)), are a transit peptide targeting the chloroplast. Residues 76-77 (RI), Asp-100, and Arg-145 each bind NADP(+). D-glyceraldehyde 3-phosphate contacts are provided by residues 217 to 219 (SCT), Thr-248, Arg-263, 276 to 277 (TG), and Arg-299. The Nucleophile role is filled by Cys-218. Asn-381 provides a ligand contact to NADP(+).

It belongs to the glyceraldehyde-3-phosphate dehydrogenase family. In terms of assembly, tetramer of either four A chains (GAPDH 2) or two A and two B chains (GAPDH 1).

It localises to the plastid. The protein resides in the chloroplast. The catalysed reaction is D-glyceraldehyde 3-phosphate + phosphate + NADP(+) = (2R)-3-phospho-glyceroyl phosphate + NADPH + H(+). Its pathway is carbohydrate biosynthesis; Calvin cycle. In Spinacia oleracea (Spinach), this protein is Glyceraldehyde-3-phosphate dehydrogenase A, chloroplastic (GAPA).